The sequence spans 241 residues: Pyridoxine 5'-phosphate synthase (241 aa).

Residue asparagine 10 participates in 3-amino-2-oxopropyl phosphate binding. 12–13 (DH) provides a ligand contact to 1-deoxy-D-xylulose 5-phosphate. A 3-amino-2-oxopropyl phosphate-binding site is contributed by arginine 21. Residue histidine 48 is the Proton acceptor of the active site. 1-deoxy-D-xylulose 5-phosphate contacts are provided by arginine 50 and histidine 55. The active-site Proton acceptor is the glutamate 75. Threonine 105 is a 1-deoxy-D-xylulose 5-phosphate binding site. The Proton donor role is filled by histidine 195. Residues glycine 196 and 217–218 (GH) contribute to the 3-amino-2-oxopropyl phosphate site.

This sequence belongs to the PNP synthase family. In terms of assembly, homooctamer; tetramer of dimers.

It is found in the cytoplasm. It carries out the reaction 3-amino-2-oxopropyl phosphate + 1-deoxy-D-xylulose 5-phosphate = pyridoxine 5'-phosphate + phosphate + 2 H2O + H(+). The protein operates within cofactor biosynthesis; pyridoxine 5'-phosphate biosynthesis; pyridoxine 5'-phosphate from D-erythrose 4-phosphate: step 5/5. Its function is as follows. Catalyzes the complicated ring closure reaction between the two acyclic compounds 1-deoxy-D-xylulose-5-phosphate (DXP) and 3-amino-2-oxopropyl phosphate (1-amino-acetone-3-phosphate or AAP) to form pyridoxine 5'-phosphate (PNP) and inorganic phosphate. This Bdellovibrio bacteriovorus (strain ATCC 15356 / DSM 50701 / NCIMB 9529 / HD100) protein is Pyridoxine 5'-phosphate synthase.